Consider the following 211-residue polypeptide: Thiamine-phosphate synthase (211 aa).

Residues 44 to 48 (QYRNK) and Asn-75 each bind 4-amino-2-methyl-5-(diphosphooxymethyl)pyrimidine. Mg(2+)-binding residues include Asp-76 and Asp-95. A 4-amino-2-methyl-5-(diphosphooxymethyl)pyrimidine-binding site is contributed by Ser-114. Residue 140-142 (TKS) participates in 2-[(2R,5Z)-2-carboxy-4-methylthiazol-5(2H)-ylidene]ethyl phosphate binding. Lys-143 is a binding site for 4-amino-2-methyl-5-(diphosphooxymethyl)pyrimidine. 2-[(2R,5Z)-2-carboxy-4-methylthiazol-5(2H)-ylidene]ethyl phosphate is bound at residue Gly-171.

It belongs to the thiamine-phosphate synthase family. It depends on Mg(2+) as a cofactor.

It catalyses the reaction 2-[(2R,5Z)-2-carboxy-4-methylthiazol-5(2H)-ylidene]ethyl phosphate + 4-amino-2-methyl-5-(diphosphooxymethyl)pyrimidine + 2 H(+) = thiamine phosphate + CO2 + diphosphate. The catalysed reaction is 2-(2-carboxy-4-methylthiazol-5-yl)ethyl phosphate + 4-amino-2-methyl-5-(diphosphooxymethyl)pyrimidine + 2 H(+) = thiamine phosphate + CO2 + diphosphate. It carries out the reaction 4-methyl-5-(2-phosphooxyethyl)-thiazole + 4-amino-2-methyl-5-(diphosphooxymethyl)pyrimidine + H(+) = thiamine phosphate + diphosphate. It functions in the pathway cofactor biosynthesis; thiamine diphosphate biosynthesis; thiamine phosphate from 4-amino-2-methyl-5-diphosphomethylpyrimidine and 4-methyl-5-(2-phosphoethyl)-thiazole: step 1/1. Condenses 4-methyl-5-(beta-hydroxyethyl)thiazole monophosphate (THZ-P) and 2-methyl-4-amino-5-hydroxymethyl pyrimidine pyrophosphate (HMP-PP) to form thiamine monophosphate (TMP). This Koribacter versatilis (strain Ellin345) protein is Thiamine-phosphate synthase.